A 760-amino-acid polypeptide reads, in one-letter code: Striatin-4 (760 aa).

Residues M1–L65 form a disordered region. Positions A7–S35 are enriched in low complexity. The span at P43–P54 shows a compositional bias: gly residues. S53 carries the phosphoserine modification. A coiled-coil region spans residues L69 to K136. The interval F71–F79 is caveolin-binding. Residues E165–L182 are calmodulin-binding. S206, S223, and S276 each carry phosphoserine. Disordered regions lie at residues N210 to E233 and E272 to L346. Acidic residues-rich tracts occupy residues E272–D283 and E302–N317. Basic and acidic residues predominate over residues P332–L346. WD repeat units lie at residues S443–K482, A496–Y535, G549–L588, G595–T635, S642–S681, A684–E723, and K730–F759.

It belongs to the WD repeat striatin family. In terms of assembly, part of the core of STRIPAK complexes composed of PP2A catalytic and scaffolding subunits, the striatins (PP2A regulatory subunits), the striatin-associated proteins MOB4, STRIP1 and STRIP2, PDCD10 and members of the STE20 kinases, such as STK24 and STK26. Interacts with CTTNBP2NL. Mainly expressed in brain but is also expressed at low levels in the kidney.

The protein localises to the cytoplasm. It is found in the membrane. The protein resides in the cell projection. Its subcellular location is the dendritic spine. In terms of biological role, calmodulin-binding scaffolding protein which is the center of the striatin-interacting phosphatase and kinase (STRIPAK) complexes. STRIPAK complexes have critical roles in protein (de)phosphorylation and are regulators of multiple signaling pathways including Hippo, MAPK, nuclear receptor and cytoskeleton remodeling. Different types of STRIPAK complexes are involved in a variety of biological processes such as cell growth, differentiation, apoptosis, metabolism and immune regulation. Key regulator of the expanded Hippo signaling pathway by interacting and allowing the inhibition of MAP4K kinases by the STRIPAK complex. The sequence is that of Striatin-4 (Strn4) from Mus musculus (Mouse).